Here is a 196-residue protein sequence, read N- to C-terminus: Retinol-binding protein 4 (196 aa).

The signal sequence occupies residues 1–21 (MAYTWRALLLLALAFLGSSMA). 3 cysteine pairs are disulfide-bonded: C25/C181, C91/C195, and C141/C150. Q119 contributes to the substrate binding site.

This sequence belongs to the calycin superfamily. Lipocalin family. In terms of assembly, interacts with TTR. Interaction with TTR prevents its loss by filtration through the kidney glomeruli. Interacts with STRA6.

The protein localises to the secreted. Functionally, retinol-binding protein that mediates retinol transport in blood plasma. Delivers retinol from the liver stores to the peripheral tissues. Transfers the bound all-trans retinol to STRA6, that then facilitates retinol transport across the cell membrane. This chain is Retinol-binding protein 4 (RBP4), found in Gallus gallus (Chicken).